Here is a 496-residue protein sequence, read N- to C-terminus: 3-octaprenyl-4-hydroxybenzoate carboxy-lyase (496 aa).

Asn-181 lines the Mn(2+) pocket. Prenylated FMN contacts are provided by residues 184–186, 198–200, and 203–204; these read IYR, RWL, and RG. Glu-247 serves as a coordination point for Mn(2+). Asp-296 functions as the Proton donor in the catalytic mechanism.

The protein belongs to the UbiD family. In terms of assembly, homohexamer. Prenylated FMN is required as a cofactor. The cofactor is Mn(2+).

It localises to the cell membrane. It catalyses the reaction a 4-hydroxy-3-(all-trans-polyprenyl)benzoate + H(+) = a 2-(all-trans-polyprenyl)phenol + CO2. It participates in cofactor biosynthesis; ubiquinone biosynthesis. In terms of biological role, catalyzes the decarboxylation of 3-octaprenyl-4-hydroxy benzoate to 2-octaprenylphenol, an intermediate step in ubiquinone biosynthesis. This Aromatoleum aromaticum (strain DSM 19018 / LMG 30748 / EbN1) (Azoarcus sp. (strain EbN1)) protein is 3-octaprenyl-4-hydroxybenzoate carboxy-lyase.